The following is a 159-amino-acid chain: Ribosomal RNA large subunit methyltransferase H (159 aa).

S-adenosyl-L-methionine is bound by residues Leu-76, Gly-107, and 126–131 (LSKLTM).

This sequence belongs to the RNA methyltransferase RlmH family. In terms of assembly, homodimer.

Its subcellular location is the cytoplasm. The enzyme catalyses pseudouridine(1915) in 23S rRNA + S-adenosyl-L-methionine = N(3)-methylpseudouridine(1915) in 23S rRNA + S-adenosyl-L-homocysteine + H(+). In terms of biological role, specifically methylates the pseudouridine at position 1915 (m3Psi1915) in 23S rRNA. This Acinetobacter baumannii (strain SDF) protein is Ribosomal RNA large subunit methyltransferase H.